A 277-amino-acid chain; its full sequence is Energy-coupling factor transporter ATP-binding protein EcfA1 (277 aa).

Residues Leu-5 to Asp-240 enclose the ABC transporter domain. Gly-40–Ser-47 is an ATP binding site.

It belongs to the ABC transporter superfamily. Energy-coupling factor EcfA family. As to quaternary structure, forms a stable energy-coupling factor (ECF) transporter complex composed of 2 membrane-embedded substrate-binding proteins (S component), 2 ATP-binding proteins (A component) and 2 transmembrane proteins (T component).

Its subcellular location is the cell membrane. Functionally, ATP-binding (A) component of a common energy-coupling factor (ECF) ABC-transporter complex. Unlike classic ABC transporters this ECF transporter provides the energy necessary to transport a number of different substrates. In Lactococcus lactis subsp. lactis (strain IL1403) (Streptococcus lactis), this protein is Energy-coupling factor transporter ATP-binding protein EcfA1.